The following is a 246-amino-acid chain: Pyridoxine 5'-phosphate synthase (246 aa).

Asn-6 lines the 3-amino-2-oxopropyl phosphate pocket. 8-9 (DH) is a 1-deoxy-D-xylulose 5-phosphate binding site. Arg-17 lines the 3-amino-2-oxopropyl phosphate pocket. Catalysis depends on His-49, which acts as the Proton acceptor. Residues Arg-51 and His-56 each contribute to the 1-deoxy-D-xylulose 5-phosphate site. Glu-76 functions as the Proton acceptor in the catalytic mechanism. 1-deoxy-D-xylulose 5-phosphate is bound at residue Thr-106. The active-site Proton donor is the His-196. 3-amino-2-oxopropyl phosphate contacts are provided by residues Gly-197 and 219–220 (GH).

The protein belongs to the PNP synthase family. Homooctamer; tetramer of dimers.

The protein resides in the cytoplasm. The enzyme catalyses 3-amino-2-oxopropyl phosphate + 1-deoxy-D-xylulose 5-phosphate = pyridoxine 5'-phosphate + phosphate + 2 H2O + H(+). Its pathway is cofactor biosynthesis; pyridoxine 5'-phosphate biosynthesis; pyridoxine 5'-phosphate from D-erythrose 4-phosphate: step 5/5. Functionally, catalyzes the complicated ring closure reaction between the two acyclic compounds 1-deoxy-D-xylulose-5-phosphate (DXP) and 3-amino-2-oxopropyl phosphate (1-amino-acetone-3-phosphate or AAP) to form pyridoxine 5'-phosphate (PNP) and inorganic phosphate. This is Pyridoxine 5'-phosphate synthase from Akkermansia muciniphila (strain ATCC BAA-835 / DSM 22959 / JCM 33894 / BCRC 81048 / CCUG 64013 / CIP 107961 / Muc).